We begin with the raw amino-acid sequence, 269 residues long: Bis(5'-nucleosyl)-tetraphosphatase, symmetrical (269 aa).

This sequence belongs to the Ap4A hydrolase family.

The catalysed reaction is P(1),P(4)-bis(5'-adenosyl) tetraphosphate + H2O = 2 ADP + 2 H(+). In terms of biological role, hydrolyzes diadenosine 5',5'''-P1,P4-tetraphosphate to yield ADP. The sequence is that of Bis(5'-nucleosyl)-tetraphosphatase, symmetrical from Vibrio cholerae serotype O1 (strain ATCC 39541 / Classical Ogawa 395 / O395).